A 131-amino-acid chain; its full sequence is MSEDLSPTSSRVDLSNPHGFTKEGVDLSKLSPQELKLYKMYGKLPSKKDLLRHKMQDRQYFDSGDYALKKAGVIKSDDVIVNNSSNNLPVTNPSGLRESIIRRRMSSSSGGDSISRQGSISSGPPPRSPNK.

Residues 1 to 13 (MSEDLSPTSSRVD) show a composition bias toward polar residues. The interval 1-26 (MSEDLSPTSSRVDLSNPHGFTKEGVD) is disordered. Serine 2 is subject to N-acetylserine. Residues serine 6, serine 63, serine 108, and serine 119 each carry the phosphoserine modification. Residues 81 to 131 (VNNSSNNLPVTNPSGLRESIIRRRMSSSSGGDSISRQGSISSGPPPRSPNK) form a disordered region. The segment covering 106–122 (SSSSGGDSISRQGSISS) has biased composition (low complexity).

Belongs to the endosulfine family. In terms of processing, phosphorylated by RIM15.

It is found in the cytoplasm. The protein resides in the nucleus. Functionally, required for TORC1 to properly control gene expression and chronological life span. Plays an essential role in initiation of the G0 program by preventing the degradation of specific nutrient-regulated mRNAs via the 5'-3' mRNA decay pathway. In Saccharomyces cerevisiae (strain ATCC 204508 / S288c) (Baker's yeast), this protein is mRNA stability protein IGO2 (IGO2).